We begin with the raw amino-acid sequence, 589 residues long: MTNSTDRPVSVSSWRTYRRLVAFAKPYRLLLVAALIAALIEAAGTTGFLALMKPITDETFIYKNAEVSRWLPVQIILLFVVRGIAGYITDMAMGKSARSIARDLRIKVMAKYLRLPGSRFDSEPVPSMLIRLGSDSDQVAQAAVDAIKVMIQQSLQVIGALALMLWHSWQVTLTILVLAPVLAWVMDKVARRYRRISHSIQESGAHLLQAADQTLSSHQEVKIYGAQQTEMERYGALADRNLRLAMKVESTRGISTATVQMIGAIGLSALLFVAGAQALAGRLTAGDFVVLMTSMLTIIPGLKQLTNVQNMVQRGLASAERLFSVLDSPDEPDQGAVALTRAKGLIEFRDVTARYPGQVNPALADVSFIAQPGTVTAIVGRSGSGKSSLIKLIPRFYDAEAGQILLDGQPVQAYALADLRRQIALVGQQVMLFDGSIAENVAFGEMRSADASQLERAILGANAMEFVAQLPEGLQSHVGAKGGRLSGGQRQRLAIARAMLKDAPILILDEATAALDNESERLVQDALHKLMPDRTTLVIAHRLSTIEHADQVLVMDQGRIVERGTHHELLAQGGLYSHLHGMQFRERQA.

The next 5 helical transmembrane spans lie at 29-49 (LLLVAALIAALIEAAGTTGFL), 70-90 (WLPVQIILLFVVRGIAGYITD), 157-177 (VIGALALMLWHSWQVTLTILV), 261-281 (MIGAIGLSALLFVAGAQALAG), and 283-303 (LTAGDFVVLMTSMLTIIPGLK). The 283-residue stretch at 32–314 (VAALIAALIE…LTNVQNMVQR (283 aa)) folds into the ABC transmembrane type-1 domain. The region spanning 346-582 (IEFRDVTARY…GGLYSHLHGM (237 aa)) is the ABC transporter domain. ATP is bound at residue 380-387 (GRSGSGKS).

It belongs to the ABC transporter superfamily. Lipid exporter (TC 3.A.1.106) family. As to quaternary structure, homodimer.

The protein localises to the cell inner membrane. It catalyses the reaction ATP + H2O + lipid A-core oligosaccharideSide 1 = ADP + phosphate + lipid A-core oligosaccharideSide 2.. Its function is as follows. Involved in lipopolysaccharide (LPS) biosynthesis. Translocates lipid A-core from the inner to the outer leaflet of the inner membrane. Transmembrane domains (TMD) form a pore in the inner membrane and the ATP-binding domain (NBD) is responsible for energy generation. This Xanthomonas oryzae pv. oryzae (strain MAFF 311018) protein is ATP-dependent lipid A-core flippase.